The primary structure comprises 407 residues: Formamidase (407 aa).

In terms of assembly, homotrimer.

The enzyme catalyses formamide + H2O = formate + NH4(+). Its function is as follows. Hydrolyzes formamide with the production of ammonia which can be used as a source of nitrogen for growth. Also acts, more slowly, on acetamide, propanamide and butanamide. This Methylophilus methylotrophus (Bacterium W3A1) protein is Formamidase (fmdA).